The following is a 242-amino-acid chain: Myogenic factor 6 (242 aa).

The tract at residues 31 to 63 is disordered; it reads SPLYPGSDGTLSPCQDQMPPEAGSDSSGEEHVL. In terms of domain architecture, bHLH spans 93-144; it reads DRRKAATLRERRRLKKINEAFEALKRRTVANPNQRLPKVEILRSAINYIERL.

In terms of assembly, efficient DNA binding requires dimerization with another bHLH protein.

The protein resides in the nucleus. Involved in muscle differentiation (myogenic factor). Induces fibroblasts to differentiate into myoblasts. Probable sequence specific DNA-binding protein. The polypeptide is Myogenic factor 6 (MYF6) (Sus scrofa (Pig)).